Reading from the N-terminus, the 666-residue chain is Transketolase (666 aa).

His-28 is a binding site for substrate. Thiamine diphosphate-binding positions include His-68 and 116–118; that span reads GPL. Asp-157 is a binding site for Mg(2+). Residues Gly-158 and Asn-187 each coordinate thiamine diphosphate. The Mg(2+) site is built by Asn-187 and Ile-189. The substrate site is built by His-262, Arg-356, and Ser-383. Position 262 (His-262) interacts with thiamine diphosphate. Glu-410 (proton donor) is an active-site residue. Phe-436 contacts thiamine diphosphate. Substrate-binding residues include His-460, Asp-468, and Arg-519.

The protein belongs to the transketolase family. Homodimer. Mg(2+) serves as cofactor. The cofactor is Ca(2+). It depends on Mn(2+) as a cofactor. Co(2+) is required as a cofactor. Requires thiamine diphosphate as cofactor.

It carries out the reaction D-sedoheptulose 7-phosphate + D-glyceraldehyde 3-phosphate = aldehydo-D-ribose 5-phosphate + D-xylulose 5-phosphate. Functionally, catalyzes the transfer of a two-carbon ketol group from a ketose donor to an aldose acceptor, via a covalent intermediate with the cofactor thiamine pyrophosphate. This is Transketolase (tkt) from Halalkalibacterium halodurans (strain ATCC BAA-125 / DSM 18197 / FERM 7344 / JCM 9153 / C-125) (Bacillus halodurans).